Here is a 2623-residue protein sequence, read N- to C-terminus: MKVKGRGITCLLVSFAVICLVATPGGKACPRRCACYMPTEVHCTFRYLTSIPDSIPPNVERINLGYNSLVRLMETDFSGLTKLELLMLHSNGIHTIPDKTFSDLQALQVLKMSYNKVRKLQKDTFYGLRSLTRLHMDHNNIEFINPEVFYGLNFLRLVHLEGNQLTKLHPDTFVSLSYLQIFKISFIKFLYLSDNFLTSLPQEMVSYMPDLDSLYLHGNPWTCDCHLKWLSDWIQEKPDVIKCKKDRSPSSAQQCPLCMNPRTSKGKPLAMVSAAAFQCAKPTIDSSLKSKSLTILEDSSSAFISPQGFMAPFGSLTLNMTDQSGNEANMVCSIQKPSRTSPIAFTEENDYIVLNTSFSTFLVCNIDYGHIQPVWQILALYSDSPLILERSHLLSETPQLYYKYKQVAPKPEDIFTNIEADLRADPSWLMQDQISLQLNRTATTFSTLQIQYSSDAQITLPRAEMRPVKHKWTMISRDNNTKLEHTVLVGGTVGLNCPGQGDPTPHVDWLLADGSKVRAPYVSEDGRILIDKSGKLELQMADSFDTGVYHCISSNYDDADILTYRITVVEPLVEAYQENGIHHTVFIGETLDLPCHSTGIPDASISWVIPGNNVLYQSSRDKKVLNNGTLRILQVTPKDQGYYRCVAANPSGVDFLIFQVSVKMKGQRPLEHDGETEGSGLDESNPIAHLKEPPGAQLRTSALMEAEVGKHTSSTSKRHNYRELTLQRRGDSTHRRFRENRRHFPPSARRIDPQHWAALLEKAKKNAMPDKRENTTVSPPPVVTQLPNIPGEEDDSSGMLALHEEFMVPATKALNLPARTVTADSRTISDSPMTNINYGTEFSPVVNSQILPPEEPTDFKLSTAIKTTAMSKNINPTMSSQIQGTTNQHSSTVFPLLLGATEFQDSDQMGRGREHFQSRPPITVRTMIKDVNVKMLSSTTNKLLLESVNTTNSHQTSVREVSEPRHNHFYSHTTQILSTSTFPSDPHTAAHSQFPIPRNSTVNIPLFRRFGRQRKIGGRGRIISPYRTPVLRRHRYSIFRSTTRGSSEKSTTAFSATVLNVTCLSCLPRERLTTATAALSFPSAAPITFPKADIARVPSEESTTLVQNPLLLLENKPSVEKTTPTIKYFRTEISQVTPTGAVMTYAPTSIPMEKTHKVNASYPRVSSTNEAKRDSVITSSLSGAITKPPMTIIAITRFSRRKIPWQQNFVNNHNPKGRLRNQHKVSLQKSTAVMLPKTSPALPRDKVSPFHFTTLSTSVMQIPSNTLTTAHHTTTKTHNPGSLPTKKELPFPPLNPMLPSIISKDSSTKSIISTQTAIPATTPTFPASVITYETQTERSRAQTIQREQEPQKKNRTDPNISPDQSSGFTTPTAMTPPVLTTAETSVKPSVSAFTHSPPENTTGISSTISFHSRTLNLTDVIEELAQASTQTLKSTIASETTLSSKSHQSTTTRKAIIRHSTIPPFLSSSATLMPVPISPPFTQRAVTDNVATPISGLMTNTVVKLHESSRHNAKPQQLVAEVATSPKVHPNAKFTIGTTHFIYSNLLHSTPMPALTTVKSQNSKLTPSPWAENQFWHKPYSEIAEKGKKPEVSMLATTGLSEATTLVSDWDGQKNTKKSDFDKKPVQEATTSKLLPFDSLSRYIFEKPRIVGGKAASFTIPANSDAFLPCEAVGNPLPTIHWTRVPSGLDLSKRKQNSRVQVLPNGTLSIQRVEIQDRGQYLCSASNLFGTDHLHVTLSVVSYPPRILERRTKEITVHSGSTVELKCRAEGRPSPTVTWILANQTVVSESSQGSRQAVVTVDGTLVLHNLSIYDRGFYKCVASNPGGQDSLLVKIQVIAAPPVILEQRRQVIVGTWGESLKLPCTAKGTPQPSVYWVLSDGTEVKPLQFTNSKLFLFSNGTLYIRNLASSDRGTYECIATSSTGSERRVVMLTMEERVTSPRIEAASQKRTEVNFGDKLLLNCSATGEPKPQIMWRLPSKAVVDQQHRVGSWIHVYPNGSLFIGSVTEKDSGVYLCVARNKMGDDLILMHVSLRLKPAKIDHKQYFRKQVLHGKDFQVDCKASGSPVPEISWSLPDGTMINNAMQADDSGHRTRRYTLFNNGTLYFNKVGVAEEGDYTCYAQNTLGKDEMKVHLTVITAAPRIRQSNKTNKRIKAGDTAVLDCEVTGDPKPKIFWLLPSNDMISFSIDRYTFHANGSLTINKVKLLDSGEYVCVARNPSGDDTKMYKLDVVSKPPLINGLYTNRTVIKATAVRHSKKHFDCRAEGTPSPEVMWIMPDNIFLTAPYYGSRITVHKNGTLEIRNVRLSDSADFICVARNEGGESVLVVQLEVLEMLRRPTFRNPFNEKIVAQLGKSTALNCSVDGNPPPEIIWILPNGTRFSNGPQSYQYLIASNGSFIISKTTREDAGKYRCAARNKVGYIEKLVILEIGQKPVILTYAPGTVKGISGESLSLHCVSDGIPKPNIKWTMPSGYVVDRPQINGKYILHDNGTLVIKEATAYDRGNYICKAQNSVGHTLITVPVMIVAYPPRITNRPPRSIVTRTGAAFQLHCVALGVPKPEITWEMPDHSLLSTASKERTHGSEQLHLQGTLVIQNPQTSDSGIYKCTAKNPLGSDYAATYIQVI.

The first 28 residues, 1–28 (MKVKGRGITCLLVSFAVICLVATPGGKA), serve as a signal peptide directing secretion. Residues 29–56 (CPRRCACYMPTEVHCTFRYLTSIPDSIP) enclose the LRRNT domain. LRR repeat units lie at residues 58–79 (NVERINLGYNSLVRLMETDFSG), 82–103 (KLELLMLHSNGIHTIPDKTFSD), 106–127 (ALQVLKMSYNKVRKLQKDTFYG), 130–151 (SLTRLHMDHNNIEFINPEVFYG), 154–175 (FLRLVHLEGNQLTKLHPDTFVS), and 186–207 (FIKFLYLSDNFLTSLPQEMVSY). In terms of domain architecture, LRRCT spans 219 to 281 (NPWTCDCHLK…VSAAAFQCAK (63 aa)). N-linked (GlcNAc...) asparagine glycans are attached at residues N319 and N439. Ig-like C2-type domains are found at residues 461 to 567 (PRAE…YRIT) and 571 to 661 (PLVE…FQVS). 2 disulfide bridges follow: C497-C551 and C595-C645. N-linked (GlcNAc...) asparagine glycosylation occurs at N627. Disordered regions lie at residues 668–692 (RPLEHDGETEGSGLDESNPIAHLKE) and 767–788 (AMPDKRENTTVSPPPVVTQLPN). N-linked (GlcNAc...) asparagine glycans are attached at residues N774 and N999. 2 disordered regions span residues 1334-1376 (TQTE…AMTP) and 1434-1453 (STIASETTLSSKSHQSTTTR). Residues 1335-1356 (QTERSRAQTIQREQEPQKKNRT) show a composition bias toward basic and acidic residues. Over residues 1357 to 1373 (DPNISPDQSSGFTTPTA) the composition is skewed to polar residues. Ig-like C2-type domains are found at residues 1648–1739 (PRIV…VTLS), 1745–1836 (PRIL…VKIQ), 1841–1933 (PPVI…VMLT), 1941–2034 (PRIE…VSLR), 2037–2135 (PAKI…VHLT), 2141–2229 (PRIR…YKLD), 2234–2331 (PPLI…LEVL), 2337–2427 (PTFR…VILE), 2432–2518 (PVIL…TLIT), and 2528–2623 (PRIT…IQVI). Intrachain disulfides connect C1670/C1723, C1767/C1820, and C1864/C1917. N1899 and N1962 each carry an N-linked (GlcNAc...) asparagine glycan. 7 disulfides stabilise this stretch: C1963-C2016, C2060-C2119, C2163-C2213, C2261-C2313, C2359-C2411, C2454-C2506, and C2550-C2605. N2101 carries an N-linked (GlcNAc...) asparagine glycan. The residue at position 2603 (Y2603) is a Phosphotyrosine.

The protein localises to the secreted. Involved in the control of early migration of neurons expressing gonadotropin-releasing hormone (GNRH neurons). May be involved in the maintenance of osteochondroprogenitor cells pool. This is Immunoglobulin superfamily member 10 (IGSF10) from Homo sapiens (Human).